The primary structure comprises 526 residues: Osmo-independent choline transporter BetT1 (526 aa).

Residues 1–17 are Cytoplasmic-facing; the sequence is MWSKRDEQKTYPPIRLN. The chain crosses the membrane as a helical span at residues 18 to 38; that stretch reads PFVFWSSAISISIFGMLFVLF. Over 39–56 the chain is Periplasmic; the sequence is PETSQHGLTWIQQQVNQL. A helical membrane pass occupies residues 57–77; sequence FGWYYMLVIILSLGFVAWLAF. Residues 78-93 are Cytoplasmic-facing; sequence SQVGNIPLGKAQDKPE. The helical transmembrane segment at 94 to 114 threads the bilayer; the sequence is FGYLVWTSMLFSAGIGIALLY. Residues 115–148 are Periplasmic-facing; that stretch reads YGVAEPVDHFLRPPEGQGGTVEAAQNAMMYSFLH. A helical transmembrane segment spans residues 149–169; it reads WGIHGWVLYALVGVTLGYFAF. Residues 170–200 lie on the Cytoplasmic side of the membrane; the sequence is RRDLPLALRSALYPIFGERIHGLVGHMVDGF. A helical membrane pass occupies residues 201-221; that stretch reads GILATIISLVTNLGIGALVMI. Residues 222–236 are Periplasmic-facing; the sequence is SGISYLFPDLPNTSS. The helical transmembrane segment at 237–257 threads the bilayer; that stretch reads TLVVTVIMMMLVATLTTVIGI. The Cytoplasmic segment spans residues 258 to 272; it reads EKGLAWLSRINLRLL. A helical membrane pass occupies residues 273–293; the sequence is YLLLLFVFLTGPTNHLLNGLV. Topologically, residues 294–323 are periplasmic; that stretch reads QNTGDYLSHFVQKSFDLYLYDKNATGWLAS. The helical transmembrane segment at 324–344 threads the bilayer; that stretch reads WTIFYWAWWIAWAPFVGMFIA. The Cytoplasmic segment spans residues 345 to 354; sequence RISKGRTIRE. A helical membrane pass occupies residues 355–375; sequence VVLGVCLIPLGFTLAWISIFG. Topologically, residues 376–417 are periplasmic; it reads NTAIDLILNHGQQIIGSLVIQDPALSLFKLLEYLPFHPYVAG. The helical transmembrane segment at 418 to 438 threads the bilayer; the sequence is IVVVICFVLFLTPVGSGTLMI. The Cytoplasmic portion of the chain corresponds to 439-457; the sequence is ANLSSQGGSSDSDSPIWLR. Residues 458–478 form a helical membrane-spanning segment; it reads VFWSIAITIVSIGLLLAGSFS. Topologically, residues 479-482 are periplasmic; sequence AMQS. The helical transmembrane segment at 483 to 503 threads the bilayer; sequence AVVLCGLPFSVILLLYMFGLA. Over 504 to 526 the chain is Cytoplasmic; it reads KALKQETQQPVVESHTTETSGSD.

This sequence belongs to the BCCT transporter (TC 2.A.15) family.

Its subcellular location is the cell inner membrane. Its function is as follows. Sodium-independent high-affinity choline uptake system. Uptake is not proton coupled. May play a role in metabolic adaptation to choline-containing environments. This is Osmo-independent choline transporter BetT1 from Acinetobacter baylyi (strain ATCC 33305 / BD413 / ADP1).